The chain runs to 397 residues: CCA-adding enzyme (397 aa).

Positions 26 and 29 each coordinate ATP. CTP-binding residues include Gly26 and Arg29. Residues Asp39 and Asp41 each coordinate Mg(2+). Residues Arg110, Asp153, Arg156, Arg159, and Arg162 each coordinate ATP. Positions 110, 153, 156, 159, and 162 each coordinate CTP.

The protein belongs to the tRNA nucleotidyltransferase/poly(A) polymerase family. Bacterial CCA-adding enzyme type 3 subfamily. As to quaternary structure, homodimer. Requires Mg(2+) as cofactor.

It carries out the reaction a tRNA precursor + 2 CTP + ATP = a tRNA with a 3' CCA end + 3 diphosphate. The enzyme catalyses a tRNA with a 3' CCA end + 2 CTP + ATP = a tRNA with a 3' CCACCA end + 3 diphosphate. Catalyzes the addition and repair of the essential 3'-terminal CCA sequence in tRNAs without using a nucleic acid template. Adds these three nucleotides in the order of C, C, and A to the tRNA nucleotide-73, using CTP and ATP as substrates and producing inorganic pyrophosphate. tRNA 3'-terminal CCA addition is required both for tRNA processing and repair. Also involved in tRNA surveillance by mediating tandem CCA addition to generate a CCACCA at the 3' terminus of unstable tRNAs. While stable tRNAs receive only 3'-terminal CCA, unstable tRNAs are marked with CCACCA and rapidly degraded. The chain is CCA-adding enzyme from Bacillus cereus (strain G9842).